Consider the following 275-residue polypeptide: NH(3)-dependent NAD(+) synthetase (275 aa).

47–54 serves as a coordination point for ATP; the sequence is GISGGQDS. Asp-53 contributes to the Mg(2+) binding site. Position 139 (Arg-139) interacts with deamido-NAD(+). Thr-159 is a binding site for ATP. Residue Glu-164 coordinates Mg(2+). Lys-172 and Asp-179 together coordinate deamido-NAD(+). ATP contacts are provided by Lys-188 and Thr-210. Position 259 to 260 (259 to 260) interacts with deamido-NAD(+); sequence HK.

The protein belongs to the NAD synthetase family. As to quaternary structure, homodimer.

It carries out the reaction deamido-NAD(+) + NH4(+) + ATP = AMP + diphosphate + NAD(+) + H(+). The protein operates within cofactor biosynthesis; NAD(+) biosynthesis; NAD(+) from deamido-NAD(+) (ammonia route): step 1/1. Its function is as follows. Catalyzes the ATP-dependent amidation of deamido-NAD to form NAD. Uses ammonia as a nitrogen source. The polypeptide is NH(3)-dependent NAD(+) synthetase (Staphylococcus epidermidis (strain ATCC 35984 / DSM 28319 / BCRC 17069 / CCUG 31568 / BM 3577 / RP62A)).